The sequence spans 516 residues: Protein P54 (516 aa).

An N-terminal signal peptide occupies residues 1-27; that stretch reads MKKSLLSAVMLSSIALTAVGSPIAAAA. A disordered region spans residues 208–397; that stretch reads ATAEDKKADL…PAPAPAPNPS (190 aa). Over residues 210 to 236 the composition is skewed to basic and acidic residues; the sequence is AEDKKADLNRKKAEAEAEQARIREQAR. Composition is skewed to low complexity over residues 237-247 and 257-380; these read LAEQARQQAAQ and QAAA…TVTP. A compositionally biased stretch (pro residues) spans 381–395; it reads APTPTPTPAPAPAPN. The NlpC/P60 domain maps to 399 to 516; that stretch reads SVNGAAIVAE…WYTPDFAVSM (118 aa). Residue Cys429 is the Nucleophile of the active site. Residue His480 is the Proton acceptor of the active site. Residue His492 is part of the active site.

Belongs to the peptidase C40 family.

The protein localises to the secreted. Its subcellular location is the cell wall. The protein is Protein P54 of Enterococcus faecium (Streptococcus faecium).